Here is a 693-residue protein sequence, read N- to C-terminus: Zinc finger protein 441 (693 aa).

One can recognise a KRAB domain in the interval 4 to 79 (VAFEDVAINF…ERACEIKDNS (76 aa)). A C2H2-type 1 zinc finger spans residues 169–190 (YDCKECASFSSLENLQRHMAAH). The segment at 196–218 (RICKLCGNAFIWPSLFHMLRRTH) adopts a C2H2-type 2; degenerate zinc-finger fold. Residues 224-246 (YEYEQCSTAFPAYSSTLRHERTH) form a C2H2-type 3; degenerate zinc finger. Residues 252–274 (YQCKQCGKAFSCSCYTQLYERTH) form a C2H2-type 4; degenerate zinc finger. 15 consecutive C2H2-type zinc fingers follow at residues 280–302 (YECKQCGKAFYHLGSFQRHMIVH), 308–330 (HKCKICGKGFLSPSSVRRHKRTH), 336–358 (YECKYCGKAFSDCTGFRRHMITH), 364–386 (HKCKVCGKAFDSPSLCRRHETTH), 392–413 (YKCECGKAFSDFYYFRNHETTH), 419–441 (YKCKQCGKAFICCTYLQIHERIH), 447–469 (YKCKQCGKAFRSSNYIRVHEKTH), 475–497 (YECKQCGKALSHLKSFQRHMIMH), 503–525 (HKCKICGKSFDSPSSFRRHERIH), 531–553 (YKCKLCGKGFRSSSYIQLHERTH), 559–581 (YGCQQCGKALSDLSSFRRHMITH), 587–609 (HKCKICGKGFDYPSSVQRHERTH), 615–637 (YECKECGKAFSHSSYLRIHERVH), 643–665 (YKCKECGKPFHCPSAFHKHERTH), and 671–693 (YKCKECGEAFHCISSFHKHEMTH).

It belongs to the krueppel C2H2-type zinc-finger protein family.

It localises to the nucleus. May be involved in transcriptional regulation. This chain is Zinc finger protein 441 (ZNF441), found in Homo sapiens (Human).